The chain runs to 418 residues: Putative methylthiotransferase jhp_0270 (418 aa).

The MTTase N-terminal domain occupies 2–110 (KKVYFKTFGC…INALLQEKKR (109 aa)). Positions 11, 45, 74, 144, 148, and 151 each coordinate [4Fe-4S] cluster. The region spanning 130–355 (FVGKTRAFIK…KDLIFHKNKA (226 aa)) is the Radical SAM core domain.

Belongs to the methylthiotransferase family. Requires [4Fe-4S] cluster as cofactor.

In Helicobacter pylori (strain J99 / ATCC 700824) (Campylobacter pylori J99), this protein is Putative methylthiotransferase jhp_0270.